Reading from the N-terminus, the 740-residue chain is Phosphoribosylformylglycinamidine synthase subunit PurL (740 aa).

His49 is a catalytic residue. Residues Tyr52 and Lys91 each contribute to the ATP site. Residue Glu93 participates in Mg(2+) binding. Residues 94 to 97 (SHNH) and Arg116 each bind substrate. The Proton acceptor role is filled by His95. Mg(2+) is bound at residue Asp117. Gln245 contacts substrate. Asp273 contacts Mg(2+). 317 to 319 (ESQ) contributes to the substrate binding site. ATP contacts are provided by Asp501 and Gly538. Asn539 is a Mg(2+) binding site. Residue Ser541 coordinates substrate.

Belongs to the FGAMS family. As to quaternary structure, monomer. Part of the FGAM synthase complex composed of 1 PurL, 1 PurQ and 2 PurS subunits.

Its subcellular location is the cytoplasm. The catalysed reaction is N(2)-formyl-N(1)-(5-phospho-beta-D-ribosyl)glycinamide + L-glutamine + ATP + H2O = 2-formamido-N(1)-(5-O-phospho-beta-D-ribosyl)acetamidine + L-glutamate + ADP + phosphate + H(+). The protein operates within purine metabolism; IMP biosynthesis via de novo pathway; 5-amino-1-(5-phospho-D-ribosyl)imidazole from N(2)-formyl-N(1)-(5-phospho-D-ribosyl)glycinamide: step 1/2. In terms of biological role, part of the phosphoribosylformylglycinamidine synthase complex involved in the purines biosynthetic pathway. Catalyzes the ATP-dependent conversion of formylglycinamide ribonucleotide (FGAR) and glutamine to yield formylglycinamidine ribonucleotide (FGAM) and glutamate. The FGAM synthase complex is composed of three subunits. PurQ produces an ammonia molecule by converting glutamine to glutamate. PurL transfers the ammonia molecule to FGAR to form FGAM in an ATP-dependent manner. PurS interacts with PurQ and PurL and is thought to assist in the transfer of the ammonia molecule from PurQ to PurL. The polypeptide is Phosphoribosylformylglycinamidine synthase subunit PurL (Sulfurovum sp. (strain NBC37-1)).